The sequence spans 208 residues: Holliday junction resolvase RecU (208 aa).

Mg(2+) is bound by residues Thr-87, Asp-89, Glu-102, and Gln-121.

This sequence belongs to the RecU family. Mg(2+) serves as cofactor.

The protein resides in the cytoplasm. It carries out the reaction Endonucleolytic cleavage at a junction such as a reciprocal single-stranded crossover between two homologous DNA duplexes (Holliday junction).. In terms of biological role, endonuclease that resolves Holliday junction intermediates in genetic recombination. Cleaves mobile four-strand junctions by introducing symmetrical nicks in paired strands. Promotes annealing of linear ssDNA with homologous dsDNA. Required for DNA repair, homologous recombination and chromosome segregation. The protein is Holliday junction resolvase RecU of Staphylococcus aureus (strain MRSA252).